We begin with the raw amino-acid sequence, 232 residues long: Ribosomal RNA large subunit methyltransferase E (232 aa).

S-adenosyl-L-methionine contacts are provided by Gly64, Trp66, Asp97, Asp113, and Asp138. Lys178 (proton acceptor) is an active-site residue.

This sequence belongs to the class I-like SAM-binding methyltransferase superfamily. RNA methyltransferase RlmE family.

The protein resides in the cytoplasm. The catalysed reaction is uridine(2552) in 23S rRNA + S-adenosyl-L-methionine = 2'-O-methyluridine(2552) in 23S rRNA + S-adenosyl-L-homocysteine + H(+). Specifically methylates the uridine in position 2552 of 23S rRNA at the 2'-O position of the ribose in the fully assembled 50S ribosomal subunit. This chain is Ribosomal RNA large subunit methyltransferase E, found in Leptothrix cholodnii (strain ATCC 51168 / LMG 8142 / SP-6) (Leptothrix discophora (strain SP-6)).